The sequence spans 361 residues: Peptide chain release factor 1 (361 aa).

Glutamine 235 is modified (N5-methylglutamine).

Belongs to the prokaryotic/mitochondrial release factor family. In terms of processing, methylated by PrmC. Methylation increases the termination efficiency of RF1.

The protein resides in the cytoplasm. In terms of biological role, peptide chain release factor 1 directs the termination of translation in response to the peptide chain termination codons UAG and UAA. The polypeptide is Peptide chain release factor 1 (Chlamydia felis (strain Fe/C-56) (Chlamydophila felis)).